We begin with the raw amino-acid sequence, 151 residues long: Globin CTT-IV (151 aa).

The first 15 residues, 1–15 (MKLLILALCFAAASA), serve as a signal peptide directing secretion. In terms of domain architecture, Globin spans 16–151 (LTADQISTVQ…AFFGMVFAKM (136 aa)). Position 102 (histidine 102) interacts with heme b.

The protein belongs to the globin family. Monomer.

The protein is Globin CTT-IV (D) of Chironomus thummi thummi (Midge).